We begin with the raw amino-acid sequence, 341 residues long: ATPase GET3 (341 aa).

ATP is bound at residue 34–41 (KGGVGKTT). Asp63 is a catalytic residue. ATP contacts are provided by Glu245 and Asn272. Residues Cys283 and Cys286 each contribute to the Zn(2+) site.

Belongs to the arsA ATPase family. In terms of assembly, homodimer.

It is found in the cytoplasm. It localises to the endoplasmic reticulum. Its function is as follows. ATPase required for the post-translational delivery of tail-anchored (TA) proteins to the endoplasmic reticulum. Recognizes and selectively binds the transmembrane domain of TA proteins in the cytosol. This complex then targets to the endoplasmic reticulum by membrane-bound receptors, where the tail-anchored protein is released for insertion. This process is regulated by ATP binding and hydrolysis. ATP binding drives the homodimer towards the closed dimer state, facilitating recognition of newly synthesized TA membrane proteins. ATP hydrolysis is required for insertion. Subsequently, the homodimer reverts towards the open dimer state, lowering its affinity for the membrane-bound receptor, and returning it to the cytosol to initiate a new round of targeting. In Paracoccidioides brasiliensis (strain Pb18), this protein is ATPase GET3.